Consider the following 37-residue polypeptide: Large ribosomal subunit protein bL36 (37 aa).

It belongs to the bacterial ribosomal protein bL36 family.

This chain is Large ribosomal subunit protein bL36 (rpmJ), found in Mycoplasma sp.